The primary structure comprises 205 residues: uncharacterized protein (205 aa).

Belongs to the IIV-6 170L family.

This is an uncharacterized protein from Invertebrate iridescent virus 3 (IIV-3).